Here is a 304-residue protein sequence, read N- to C-terminus: Ribosome-inactivating protein 9 (304 aa).

The active site involves Glu208.

It belongs to the ribosome-inactivating protein family. Type 1 RIP subfamily. Monomer. As to expression, accumulates to high levels in seeds.

The protein resides in the cytoplasm. It catalyses the reaction Endohydrolysis of the N-glycosidic bond at one specific adenosine on the 28S rRNA.. Functionally, possesses features of some constitutive defense agent. The coordinate Opaque-2-controlled synthesis of this protein and the major seed storage proteins (zeins) may provide the germinating seedling with both nutritional benefits and protection against pathogen invasion of the surrounding endosperm. This chain is Ribosome-inactivating protein 9 (CRIP9), found in Zea mays (Maize).